A 426-amino-acid polypeptide reads, in one-letter code: Serine/threonine-protein kinase ssn3 (426 aa).

The Protein kinase domain maps to 41-368 (YHIVGFISSG…AQEALEHPYF (328 aa)). Residues 47–55 (ISSGTYGRV) and Lys71 each bind ATP. Catalysis depends on Asp173, which acts as the Proton acceptor. The interval 390–426 (RVTQDDNDIRSGSLPGTKRSGLPDDSLMGRAAKRLKE) is disordered.

It belongs to the protein kinase superfamily. CMGC Ser/Thr protein kinase family. CDC2/CDKX subfamily. As to quaternary structure, component of the srb8-11 complex, a regulatory module of the Mediator complex. It depends on Mg(2+) as a cofactor.

It localises to the nucleus. It catalyses the reaction L-seryl-[protein] + ATP = O-phospho-L-seryl-[protein] + ADP + H(+). It carries out the reaction L-threonyl-[protein] + ATP = O-phospho-L-threonyl-[protein] + ADP + H(+). The catalysed reaction is [DNA-directed RNA polymerase] + ATP = phospho-[DNA-directed RNA polymerase] + ADP + H(+). Functionally, component of the srb8-11 complex. The srb8-11 complex is a regulatory module of the Mediator complex which is itself involved in regulation of basal and activated RNA polymerase II-dependent transcription. The srb8-11 complex may be involved in the transcriptional repression of a subset of genes regulated by Mediator. It may inhibit the association of the Mediator complex with RNA polymerase II to form the holoenzyme complex. The srb8-11 complex phosphorylates the C-terminal domain (CTD) of the largest subunit of RNA polymerase II. This chain is Serine/threonine-protein kinase ssn3 (ssn3), found in Aspergillus clavatus (strain ATCC 1007 / CBS 513.65 / DSM 816 / NCTC 3887 / NRRL 1 / QM 1276 / 107).